The chain runs to 437 residues: UDP-N-acetylmuramate--L-alanine ligase (437 aa).

Residue 108 to 114 coordinates ATP; sequence GAHGKTS.

The protein belongs to the MurCDEF family.

It is found in the cytoplasm. The catalysed reaction is UDP-N-acetyl-alpha-D-muramate + L-alanine + ATP = UDP-N-acetyl-alpha-D-muramoyl-L-alanine + ADP + phosphate + H(+). It participates in cell wall biogenesis; peptidoglycan biosynthesis. Functionally, cell wall formation. The chain is UDP-N-acetylmuramate--L-alanine ligase from Staphylococcus aureus (strain JH9).